The sequence spans 1408 residues: DNA-directed RNA polymerase subunit beta (1408 aa).

Positions 1383 to 1408 (PERQRSFGGDFLGGGDGEERKTGTEA) are disordered. Basic and acidic residues predominate over residues 1399 to 1408 (GEERKTGTEA).

It belongs to the RNA polymerase beta chain family. As to quaternary structure, the RNAP catalytic core consists of 2 alpha, 1 beta, 1 beta' and 1 omega subunit. When a sigma factor is associated with the core the holoenzyme is formed, which can initiate transcription.

It catalyses the reaction RNA(n) + a ribonucleoside 5'-triphosphate = RNA(n+1) + diphosphate. Functionally, DNA-dependent RNA polymerase catalyzes the transcription of DNA into RNA using the four ribonucleoside triphosphates as substrates. In Myxococcus xanthus (strain DK1622), this protein is DNA-directed RNA polymerase subunit beta.